Here is a 284-residue protein sequence, read N- to C-terminus: Halorhodopsin (284 aa).

The Extracellular segment spans residues 1–30 (MIETAAADILAGGMVPLEMTQTQIFEAVQS). Residues 31-56 (DTLLASSLWINIALAGLSILLFVYMG) traverse the membrane as a helical segment. The Cytoplasmic segment spans residues 57–62 (RNVEDP). Residues 63–86 (RAQLIFVATLMVPLVSISSYTGLV) form a helical membrane-spanning segment. The Extracellular segment spans residues 87 to 110 (SGLTVSFLEMPAGHALAGQEVLTP). Residues 111-132 (WGRYLTWALSTPMILIAVGLLA) form a helical membrane-spanning segment. Residues 133 to 135 (GSN) are Cytoplasmic-facing. A helical membrane pass occupies residues 136–159 (TTKLFTAVVADIGMCVTGLAAALT). At 160–162 (TSS) the chain is on the extracellular side. The chain crosses the membrane as a helical span at residues 163 to 185 (YLLRWVWYAISCAFFVVVLYILL). The Cytoplasmic segment spans residues 186–197 (AEWAEDAEIAGT). A helical membrane pass occupies residues 198-221 (ADIFNTLKVLTVVLWLGYPIFWAL). Over 222–230 (GAEGLAVLD) the chain is Extracellular. A helical membrane pass occupies residues 231–259 (VAITSWAYSGMDIVAKYLFAFLLLRWVVN). Residue K246 is modified to N6-(retinylidene)lysine. Residues 260 to 284 (NERTVADVASGLGSGSRGGAAPADD) are Cytoplasmic-facing.

This sequence belongs to the archaeal/bacterial/fungal opsin family.

It is found in the cell membrane. Light-driven chloride pump. This chain is Halorhodopsin (hop), found in Halobacterium sp. (strain SG1).